The chain runs to 211 residues: MIGRMVGLEPSSRSGVLEECRECRAIVMKGDGVQTPLHKGDSILGGEGACLMRYAAWTLISAVDVVYCSLETRESVSLTFNPDGQVIVVPFMFKGYNIAALPTTKFGDLKKDTKQIENVVSFLRSDICYAVWEFLVSSVQYKDDDRFERLFDERMRGYLRNISEGTSKVYMRGNKTFSELLEMVCGRMLECSGRVAGGGHSKIWKRCHENA.

The protein belongs to the UPF0329 family.

The sequence is that of UPF0329 protein ECU07_1880/ECU10_0020 from Encephalitozoon cuniculi (strain GB-M1) (Microsporidian parasite).